The sequence spans 463 residues: Ammonium transporter 1 (463 aa).

Topologically, residues 1 to 39 (MVAGEIIKGVAAEITNGSSSSVVQKYLDCANQVAPDPGN) are extracellular. The helical transmembrane segment at 40–60 (TTWVLLSTILVLGMMPALAFF) threads the bilayer. The Cytoplasmic portion of the chain corresponds to 61–76 (EAGLLRSKNTLSIITQ). The chain crosses the membrane as a helical span at residues 77-97 (IMSGIVVLTVMWQAFGYSLTF). Topologically, residues 98 to 127 (GPDQKGIIGNLDHAFLINVSYDDCSPNAPN) are extracellular. A helical membrane pass occupies residues 128-148 (IPAAAYAFFMMMFANITPLLM). Residues 149–160 (TGAFAERVKFKA) lie on the Cytoplasmic side of the membrane. Residues 161 to 181 (FIALTVAWEIIVFYPVAHWIW) traverse the membrane as a helical segment. The Extracellular portion of the chain corresponds to 182–194 (GGGWLHKYFGVLD). The helical transmembrane segment at 195–215 (FAGGIVIHTSAGVSALVIALY) threads the bilayer. Residues 216-233 (VGRRKDFEKYGGEFPPSN) are Cytoplasmic-facing. A helical transmembrane segment spans residues 234–254 (LPLATIGAALLWMGWFGFNAG). Residues 255 to 265 (SALAAGNIATS) lie on the Extracellular side of the membrane. Residues 266–286 (AVASTQIGGSFSAIVWIILSA) form a helical membrane-spanning segment. Residues 287 to 293 (AKGKPNT) are Cytoplasmic-facing. Residues 294–314 (VSVINGVIAGLAGITPASGYI) form a helical membrane-spanning segment. Residues 315–316 (NS) are Extracellular-facing. Residues 317–337 (QYSIGLGICLGLASYYSVVLL) form a helical membrane-spanning segment. Over 338–351 (KHKLHIDDALDVSS) the chain is Cytoplasmic. Residues 352 to 372 (VHGLTGIIGSLAIGFCAELSV) traverse the membrane as a helical segment. Residues 373–392 (NPNGANGAFYGNPKLIGTQL) lie on the Extracellular side of the membrane. A helical membrane pass occupies residues 393–413 (LGVVSVAVWAAAWTWVLLKII). The Cytoplasmic segment spans residues 414 to 463 (DATIGVKIDESEEELGLDLVEHGEFAYHNISLQGNENHYSSVINSHDFFK).

It belongs to the ammonia transporter channel (TC 1.A.11.2) family.

Its subcellular location is the cell membrane. The protein localises to the endosome membrane. The protein resides in the lysosome membrane. It is found in the cytoplasmic vesicle. It localises to the phagosome membrane. Functionally, ammonium transporter that mediates the excretion of ammonium. Controls ammonium homeostasis during growth and development. Ammonium has been shown to function as a morphogen at multiple steps during the development. The protein is Ammonium transporter 1 (amtA) of Dictyostelium discoideum (Social amoeba).